A 145-amino-acid polypeptide reads, in one-letter code: Small ribosomal subunit protein uS12 (145 aa).

Position 64 is a hydroxyproline (P64).

The protein belongs to the universal ribosomal protein uS12 family.

This chain is Small ribosomal subunit protein uS12 (rps23), found in Aspergillus fumigatus (strain ATCC MYA-4609 / CBS 101355 / FGSC A1100 / Af293) (Neosartorya fumigata).